The primary structure comprises 444 residues: Argininosuccinate synthase (444 aa).

ATP-binding positions include 17-25 and A43; that span reads AFSGGLDTS. Y99 serves as a coordination point for L-citrulline. G129 and T131 together coordinate ATP. Residues T131, N135, and D136 each coordinate L-aspartate. N135 is an L-citrulline binding site. Residue D136 coordinates ATP. The L-citrulline site is built by R139 and S192. Residue D194 coordinates ATP. T201, E203, and E280 together coordinate L-citrulline.

It belongs to the argininosuccinate synthase family. Type 2 subfamily. Homotetramer.

The protein resides in the cytoplasm. The enzyme catalyses L-citrulline + L-aspartate + ATP = 2-(N(omega)-L-arginino)succinate + AMP + diphosphate + H(+). Its pathway is amino-acid biosynthesis; L-arginine biosynthesis; L-arginine from L-ornithine and carbamoyl phosphate: step 2/3. The protein is Argininosuccinate synthase of Paraburkholderia phymatum (strain DSM 17167 / CIP 108236 / LMG 21445 / STM815) (Burkholderia phymatum).